Reading from the N-terminus, the 338-residue chain is MKIYYDKDCNLSLLKGKKVAIIGYGSQGHAHANNLKDSGIDVVVGLKADSASVKKATEAGLTVLTTSEAVKIADIIMILLPDEIQGDVYREEIAPYVKQGAYLAFGHGFNIHFGQIVPRHDINVIMVAPKGPGHLVRHEYTKGGGVPSLIAIHHDPSGNSRDVALAYASANGGGKAGIIETSFKEETETDLFGEQAVLCGGISALIQAGFETLVEAGYAPEMAYFECLHETKLIVDLIYEGGIANMRYSVSNTAEYGDLTRGPRVITGETKKEMKKILTEIQEGEFAREWMLENKVNNPRFNALRRKGTEHQIEEVGARLRSMMAWIGKSKIVDKTKN.

A KARI N-terminal Rossmann domain is found at 1 to 181 (MKIYYDKDCN…GGGKAGIIET (181 aa)). NADP(+) contacts are provided by residues 24 to 27 (YGSQ), Lys-47, Ser-50, Ser-52, and 82 to 85 (DEIQ). The active site involves His-107. Gly-133 contacts NADP(+). The KARI C-terminal knotted domain maps to 182-327 (SFKEETETDL…ARLRSMMAWI (146 aa)). Residues Asp-190, Glu-194, Glu-226, and Glu-230 each coordinate Mg(2+). Residue Ser-251 participates in substrate binding.

It belongs to the ketol-acid reductoisomerase family. Requires Mg(2+) as cofactor.

It carries out the reaction (2R)-2,3-dihydroxy-3-methylbutanoate + NADP(+) = (2S)-2-acetolactate + NADPH + H(+). It catalyses the reaction (2R,3R)-2,3-dihydroxy-3-methylpentanoate + NADP(+) = (S)-2-ethyl-2-hydroxy-3-oxobutanoate + NADPH + H(+). It participates in amino-acid biosynthesis; L-isoleucine biosynthesis; L-isoleucine from 2-oxobutanoate: step 2/4. Its pathway is amino-acid biosynthesis; L-valine biosynthesis; L-valine from pyruvate: step 2/4. Involved in the biosynthesis of branched-chain amino acids (BCAA). Catalyzes an alkyl-migration followed by a ketol-acid reduction of (S)-2-acetolactate (S2AL) to yield (R)-2,3-dihydroxy-isovalerate. In the isomerase reaction, S2AL is rearranged via a Mg-dependent methyl migration to produce 3-hydroxy-3-methyl-2-ketobutyrate (HMKB). In the reductase reaction, this 2-ketoacid undergoes a metal-dependent reduction by NADPH to yield (R)-2,3-dihydroxy-isovalerate. The sequence is that of Ketol-acid reductoisomerase (NADP(+)) from Geotalea uraniireducens (strain Rf4) (Geobacter uraniireducens).